Reading from the N-terminus, the 224-residue chain is Cerebellin-2 (224 aa).

An N-terminal signal peptide occupies residues methionine 1–alanine 51. Residues asparagine 53 and asparagine 110 are each glycosylated (N-linked (GlcNAc...) asparagine). In terms of domain architecture, C1q spans serine 88–leucine 224.

Homohexamer; disulfide-linked homotrimers. The trimers are assembled via the globular C1q domains. The trimers associate via N-terminal cysteine residues to form disulfide-linked hexamers. May form homooligomers or heterooligomers with CBLN1 and CBLN3 prior to secretion. Once secreted, does not interact with other CBLN family members. Interacts with GRID2, and more weakly with GRID1. Interacts with NRXN1 and NRXN2 long and short isoforms produced by alternative promoter usage. Weakly interacts with NRXN3 short isoform and not at all with NRXN3 long isoform.

The protein resides in the secreted. Acts as a synaptic organizer in specific subsets of neurons in the brain. Essential for long-term maintenance but not establishment of excitatory synapses. Functions as part of a trans-synaptic complex by binding to postsynaptic GRID1 and presynaptic neurexins. This interaction helps regulate the activity of NMDA and AMPA receptors at hippocampal synapses without affecting synapse formation. NRXN1B-CBLN2-GRID1 complex transduce presynaptic signals into postsynaptic NMDAR response. NRXN3B-CBLN2-GRID1 complex transduce presynaptic signals into postsynaptic AMPAR response. This is Cerebellin-2 from Homo sapiens (Human).